Reading from the N-terminus, the 881-residue chain is MKEFDEMAKTYDPKEFEDRIYKWWEEEGFFTPKVDKNKKPYTIMMPPPNITGKLHLGHALDCALQDFMIRAKRMQGYEALWLPGQDHASIATEVRVEKEILKEGLNKKEMGREKFLERVWDWTKEYRERIKGQQKKLGVSADFTRESFTMDEKLNKAVRTVFVKLYEDGLIYQGNRITNWCPKCQTALSDAEIEYKEDQGFFWHIKYPVEGEDSFIEIATTRPETMLGDTAVAVNPKDERYKEFIGKLLVLPLLGRKIPVVADDYVDMEFGTGAVKITPAHDPNDYEVGKRHDLKEIVMLNNDGTIKEGFGKYSGMDRYEARKAIVSDLKEEGYLVKIKEHVHNVGTHDRCGNIIEPMVSKQWYVKMESLAKPAIEAVKAGKTKFVPERFDKIYFNWMENIQDWCISRQLWWGHRIPVWYCKDCGEIIVSEKEPKACSKCNSENLEQDKDVLDTWFSSALWPFSTLGWPDKNEDLEYFYPTDTLVTGYDIIFFWVARMVFSGIYNMGEVPFKHVYIHGLVRDAEGRKMSKSLGNGVDPLDVIDTFGADALRFMLITGNAPGNDIRYKTEKVEAARNFANKIWNASRFVLMNLDKEIMDKYKDLEEYSLADRWILSRCNSLVREVTDNIEKFELGIASQKVYDFMWNEFCDWYIELVKPVMYGEDEKAKGIAYNVLYKVLTVGLQLLHPVMPYITEEIYQHLGGEYKAIAISAWPTYEEKLKNETSENAMNQIIEAIKSIRNVRAEMNVPPSKKAKVMIFTEAENKAAFEMGEHYFEKLAYASSVSFLKSKDEAPENAVSSVTKGAELFMPLLDLIDVTKEIERLSKEKDKLKAEIQRVDKKLSNKGFVDKAPESVVEAERVKGEKYKKMLEAVEERIAALK.

The 'HIGH' region signature appears at 48 to 58; that stretch reads PNITGKLHLGH. Positions 527–531 match the 'KMSKS' region motif; it reads KMSKS. K530 serves as a coordination point for ATP. Coiled coils occupy residues 721–747 and 811–881; these read KNET…AEMN and LLDL…AALK.

Belongs to the class-I aminoacyl-tRNA synthetase family. ValS type 1 subfamily. In terms of assembly, monomer.

The protein resides in the cytoplasm. It catalyses the reaction tRNA(Val) + L-valine + ATP = L-valyl-tRNA(Val) + AMP + diphosphate. Functionally, catalyzes the attachment of valine to tRNA(Val). As ValRS can inadvertently accommodate and process structurally similar amino acids such as threonine, to avoid such errors, it has a 'posttransfer' editing activity that hydrolyzes mischarged Thr-tRNA(Val) in a tRNA-dependent manner. The chain is Valine--tRNA ligase from Clostridium acetobutylicum (strain ATCC 824 / DSM 792 / JCM 1419 / IAM 19013 / LMG 5710 / NBRC 13948 / NRRL B-527 / VKM B-1787 / 2291 / W).